The sequence spans 529 residues: Bifunctional purine biosynthesis protein PurH (529 aa).

The 148-residue stretch at 2–149 folds into the MGS-like domain; the sequence is TDLVPLRRAL…KNHSFVTVLT (148 aa).

Belongs to the PurH family.

It carries out the reaction (6R)-10-formyltetrahydrofolate + 5-amino-1-(5-phospho-beta-D-ribosyl)imidazole-4-carboxamide = 5-formamido-1-(5-phospho-D-ribosyl)imidazole-4-carboxamide + (6S)-5,6,7,8-tetrahydrofolate. It catalyses the reaction IMP + H2O = 5-formamido-1-(5-phospho-D-ribosyl)imidazole-4-carboxamide. It participates in purine metabolism; IMP biosynthesis via de novo pathway; 5-formamido-1-(5-phospho-D-ribosyl)imidazole-4-carboxamide from 5-amino-1-(5-phospho-D-ribosyl)imidazole-4-carboxamide (10-formyl THF route): step 1/1. Its pathway is purine metabolism; IMP biosynthesis via de novo pathway; IMP from 5-formamido-1-(5-phospho-D-ribosyl)imidazole-4-carboxamide: step 1/1. This is Bifunctional purine biosynthesis protein PurH from Dinoroseobacter shibae (strain DSM 16493 / NCIMB 14021 / DFL 12).